Consider the following 897-residue polypeptide: MRPMRIFLNDDRHVMAKHSVVYPTQEELEAVQNMVSHTERALKAVSDWIDQQEKDCSGEQEQPMAEETETTEEGKDSEMKTGENPTRTLRGVMRVGLVAKGLLLKGDLDLELVLLCRDKPTISLLKRVADNLVLQFETVSEDKYEVIQNIREALIVVKSTKEPPLTLNIRLTSPLVREEMEKLSAGETLTVSDPPDVLDRHKCLAALASLRHAKWFQARANGLKSCVIVIRVLRDLCTRVPTWEPLRGWPLELLCEKAIGTANRPMGAGEALRRVLECLSSGILMPDGSGLYDPCEKDASDALEHLERQQREDITQSAQHALRLAAFGQLHKVLGMDPLPSKMPKKTKVETPVIDYTVQIPPSTTYAMPPLKRPIEEDGDDKSPSKKKKKIQKKDEKSEPPQVMNALMRLNQLKPGLQYKLISQTGPVHAPVFTMSVEVDDKTFEASGPSKKTAKLHVAVKVLQDMGLPTGMEEKEEGTDESEQKPVVQTPAQPDDSAEVDSAALDQAESAKQQGPILTKHGKNPVMELNEKRRGLKYELISETGGSHDKRFVMEVEVDGVKFQGSGSNKKVAKAYAALSALEKLFPDYTMYTEAPKKKRPPMMPRGGPKFAGKHNQGFGMMYSEVPPPQAMRGRGRGGMNRGRGRGRGGFGGGYMNSGGYGGGYGGNYNYQTSATAGYSQFYSNGGASGNAGGGGAGTGGYSSYYQGDSYSAPTPPKPFVNKKPPPPQQQQQQQPPPQHASNPPKPSYNQGYQGHQGGQQQQQQQQQQQTYNQNQYSNYGPPQKQKGGYNQGAQGAGSGGSYNYSNSYTGGTAPLGTAVERVQEGEAAALTQRQALVTTQAHTPAMVEPAVLRRTKVTRSLITIKVPPDRTTVALQIITSSLREELGVTAGIQNTT.

Residues 5 to 379 form the DZF domain; sequence RIFLNDDRHV…PLKRPIEEDG (375 aa). 3 disordered regions span residues 52–85, 364–403, and 466–502; these read QEKD…GENP, TTYA…PPQV, and MGLP…EVDS. Basic and acidic residues-rich tracts occupy residues 72–81 and 373–384; these read EEGKDSEMKT and RPIEEDGDDKSP. The short motif at 372 to 390 is the Bipartite nuclear localization signal element; it reads KRPIEEDGDDKSPSKKKKK. DRBM domains are found at residues 399–468 and 521–587; these read EPPQ…DMGL and HGKN…KLFP. 2 disordered regions span residues 627–650 and 708–797; these read PPPQ…GRGG and GDSY…AQGA. Residues 637–650 show a composition bias toward gly residues; that stretch reads RGGMNRGRGRGRGG. Positions 714 to 747 are enriched in pro residues; it reads PTPPKPFVNKKPPPPQQQQQQQPPPQHASNPPKP. Residues 749 to 794 show a composition bias toward low complexity; it reads YNQGYQGHQGGQQQQQQQQQQQTYNQNQYSNYGPPQKQKGGYNQGA.

A component of a ybx2/frgy2-containing mRNA-ribonucleoprotein (mRNP) complex. Also a component of the CCAAT box transcription factor (CBTF) complex. Phosphorylated. Phosphorylation affects nuclear translocation. Post-translationally, methylated by protein arginine N-methyltransferase 1 (prmt1b) in the RGG-rich domain. Methylation decreases DNA-binding and thereby decreases transcription of the gata2 gene, but does not regulate dsRNA binding or subcellular localization. Expressed mainly in the ectoderm (at protein level).

The protein localises to the nucleus. It localises to the cytoplasm. In terms of biological role, RNA-binding protein that plays an essential role in the biogenesis of circular RNAs (circRNAs) which are produced by back-splicing circularization of pre-mRNAs. Within the nucleus, promotes circRNAs processing by stabilizing the regulatory elements residing in the flanking introns of the circularized exons. Plays thereby a role in the back-splicing of a subset of circRNAs. As a consequence, participates in a wide range of transcriptional and post-transcriptional processes. Binds to poly-U elements and AU-rich elements (AREs) in the 3'-UTR of target mRNAs. Upon viral infection, ILF3 accumulates in the cytoplasm and participates in the innate antiviral response. Mechanistically, ILF3 becomes phosphorylated and activated by the double-stranded RNA-activated protein kinase/PKR which releases ILF3 from cellular mature circRNAs. In turn, unbound ILF3 molecules are able to interact with and thus inhibit viral mRNAs. Has a cytoplasmic role early in development as part of a ribonucleoprotein (mRNP) complex which may regulate mRNA transport and/or translation. Following nuclear localization at the mid-blastula transition, acts as a transcription factor and binds the 5'-CCAAT-3' promoter sequence to regulate transcription of the gata2 gene as a subunit of the CCAAT box transcription factor (CBTF). Its role as an mRNP component negatively regulates its activity as a transcription factor by precluding its nuclear localization. In Xenopus laevis (African clawed frog), this protein is Interleukin enhancer-binding factor 3-A (ilf3-a).